A 326-amino-acid polypeptide reads, in one-letter code: AA9 family lytic polysaccharide monooxygenase B (326 aa).

The signal sequence occupies residues 1-19; it reads MKSFTIAALAALWAQEAAA. The Cu(2+) site is built by His-20 and His-98. A disulfide bridge connects residues Cys-57 and Cys-192. Residues His-178 and Gln-187 each coordinate O2. Tyr-189 serves as a coordination point for Cu(2+). Over residues 265 to 281 the composition is skewed to low complexity; sequence PSATLTQPTSTATATSA. The disordered stretch occupies residues 265–286; that stretch reads PSATLTQPTSTATATSAPGGGG. Positions 289–326 constitute a CBM1 domain; sequence CTAAKYQQCGGTGYTGCTTCASGSTCSAVSPPYYSQCL.

It belongs to the polysaccharide monooxygenase AA9 family. Requires Cu(2+) as cofactor.

The protein localises to the secreted. The catalysed reaction is [(1-&gt;4)-beta-D-glucosyl]n+m + reduced acceptor + O2 = 4-dehydro-beta-D-glucosyl-[(1-&gt;4)-beta-D-glucosyl]n-1 + [(1-&gt;4)-beta-D-glucosyl]m + acceptor + H2O.. Lytic polysaccharide monooxygenase (LPMO) that depolymerizes crystalline and amorphous polysaccharides via the oxidation of scissile alpha- or beta-(1-4)-glycosidic bonds, yielding C1 and C4 oxidation products. Catalysis by LPMOs requires the reduction of the active-site copper from Cu(II) to Cu(I) by a reducing agent and H(2)O(2) or O(2) as a cosubstrate. Shows no activity on wheat arabinoxylan, konjac glucomannan, acetylated spruce galactoglucomannan, or cellopentaose. This chain is AA9 family lytic polysaccharide monooxygenase B, found in Thermothielavioides terrestris (strain ATCC 38088 / NRRL 8126) (Thielavia terrestris).